We begin with the raw amino-acid sequence, 264 residues long: S-adenosylmethionine decarboxylase proenzyme (264 aa).

Ser-112 (schiff-base intermediate with substrate; via pyruvic acid) is an active-site residue. The residue at position 112 (Ser-112) is a Pyruvic acid (Ser); by autocatalysis. His-117 (proton acceptor; for processing activity) is an active-site residue. Cys-140 functions as the Proton donor; for catalytic activity in the catalytic mechanism.

The protein belongs to the prokaryotic AdoMetDC family. Type 2 subfamily. Heterooctamer of four alpha and four beta chains arranged as a tetramer of alpha/beta heterodimers. The cofactor is pyruvate. In terms of processing, is synthesized initially as an inactive proenzyme. Formation of the active enzyme involves a self-maturation process in which the active site pyruvoyl group is generated from an internal serine residue via an autocatalytic post-translational modification. Two non-identical subunits are generated from the proenzyme in this reaction, and the pyruvate is formed at the N-terminus of the alpha chain, which is derived from the carboxyl end of the proenzyme. The post-translation cleavage follows an unusual pathway, termed non-hydrolytic serinolysis, in which the side chain hydroxyl group of the serine supplies its oxygen atom to form the C-terminus of the beta chain, while the remainder of the serine residue undergoes an oxidative deamination to produce ammonia and the pyruvoyl group blocking the N-terminus of the alpha chain.

It carries out the reaction S-adenosyl-L-methionine + H(+) = S-adenosyl 3-(methylsulfanyl)propylamine + CO2. The protein operates within amine and polyamine biosynthesis; S-adenosylmethioninamine biosynthesis; S-adenosylmethioninamine from S-adenosyl-L-methionine: step 1/1. Functionally, catalyzes the decarboxylation of S-adenosylmethionine to S-adenosylmethioninamine (dcAdoMet), the propylamine donor required for the synthesis of the polyamines spermine and spermidine from the diamine putrescine. In Salmonella agona (strain SL483), this protein is S-adenosylmethionine decarboxylase proenzyme.